The primary structure comprises 331 residues: UBX domain-containing protein 2B (331 aa).

Disordered stretches follow at residues 1-26 (MAEG…SARD) and 40-65 (KCKS…QRFY). At alanine 2 the chain carries N-acetylalanine. A Phosphoserine modification is found at serine 56. Phosphothreonine is present on threonine 59. Serine 66 carries the phosphoserine modification. One can recognise an SEP domain in the interval 141 to 206 (DVQILLKLWS…MEDHQDQEYI (66 aa)). 3 positions are modified to phosphoserine: serine 231, serine 234, and serine 235. The UBX domain occupies 252–329 (DSVPTTKIQI…DILNTVLLQQ (78 aa)).

The protein belongs to the NSFL1C family. Interacts with VCP. Does not bind ubiquitin.

The protein resides in the nucleus. It localises to the cytoplasm. The protein localises to the cytosol. Its subcellular location is the endoplasmic reticulum. It is found in the golgi apparatus. The protein resides in the cytoskeleton. It localises to the microtubule organizing center. The protein localises to the centrosome. Its function is as follows. Adapter protein required for Golgi and endoplasmic reticulum biogenesis. Involved in Golgi and endoplasmic reticulum maintenance during interphase and in their reassembly at the end of mitosis. The complex formed with VCP has membrane fusion activity; membrane fusion activity requires USO1-GOLGA2 tethering and BET1L. VCPIP1 is also required, but not its deubiquitinating activity. Together with NSFL1C/p47, regulates the centrosomal levels of kinase AURKA/Aurora A during mitotic progression by promoting AURKA removal from centrosomes in prophase. Also, regulates spindle orientation during mitosis. The sequence is that of UBX domain-containing protein 2B (UBXN2B) from Homo sapiens (Human).